Reading from the N-terminus, the 492-residue chain is Virion host shutoff protein (492 aa).

4 disordered regions span residues 110-130 (EEASDVDASPPPSPITDSRPS), 143-165 (FAPGDRGTRAAGPGPAAPSGAPS), 288-307 (SQARRAARRERANSRSLESM), and 334-369 (EDDYEEDPPLQPPDVAGGPRDGARSSSSEILTPPEL). Low complexity predominate over residues 144–165 (APGDRGTRAAGPGPAAPSGAPS).

Belongs to the herpesviridae VHS protein family. As to quaternary structure, interacts with human EIF4H, EIF4A1 and EIF4A2; interaction with eIF4AI and EIF4A2 presumably allows Vhs protein to associate with the eIF4F cap-binding complex.

It is found in the virion. In terms of biological role, minor structural protein that acts as an endoribonuclease during lytic infection. Degrades host mRNAs in the cytoplasm by cutting them at preferred sites, including some in regions of translation initiation. Together with inhibition of host splicing by ICP27, contributes to an overall decrease in host protein synthesis. Also, after the onset of viral transcription, accelerates the turnover of viral mRNA, thereby facilitating the sequential expression of different classes of viral genes. Binds translation initiation factors eIF4H, eIF4AI, and eIF4AII, thereby may interact directly with the translation initiation complex and thus digest specifically mRNAs. Also impedes antigen presentation by major histocompatibility complex class I and class II molecules, inhibits secretion of cytokines that would otherwise recruit lymphocytes and neutrophils cells to the site of infection and blocks the activation of dendritic cells. Impedes the alpha/beta interferon-mediated response to infection. Inhibits the integrated stress response (ISR) in the infected cell, this function requires the endonuclease activity. Stress granule formation is thus inhibited, which allows protein synthesis and viral replication. The chain is Virion host shutoff protein (UL41) from Human herpesvirus 2 (strain G) (HHV-2).